The primary structure comprises 448 residues: Deoxyguanosinetriphosphate triphosphohydrolase-like protein (448 aa).

Positions 67–260 (RLTHSLEVSQ…MELADDIAYG (194 aa)) constitute an HD domain.

It belongs to the dGTPase family. Type 2 subfamily.

This Aliivibrio fischeri (strain ATCC 700601 / ES114) (Vibrio fischeri) protein is Deoxyguanosinetriphosphate triphosphohydrolase-like protein.